The chain runs to 159 residues: Ribosome maturation factor RimP (159 aa).

Belongs to the RimP family.

It localises to the cytoplasm. In terms of biological role, required for maturation of 30S ribosomal subunits. This Streptococcus pneumoniae serotype 19F (strain G54) protein is Ribosome maturation factor RimP.